A 333-amino-acid polypeptide reads, in one-letter code: T-cell surface glycoprotein CD1b1 (333 aa).

The signal sequence occupies residues 1 to 17; it reads MLLVALALLAFLFPAGD. The Extracellular portion of the chain corresponds to 18-302; it reads TQNALQWPTS…LYWGHSISIG (285 aa). N-linked (GlcNAc...) asparagine glycans are attached at residues Asn38, Asn75, and Asn146. Cystine bridges form between Cys120–Cys184, Cys149–Cys163, and Cys224–Cys279. The Ig-like domain occupies 197–295; it reads PDIQKQVKPD…LEGQDIILYW (99 aa). Residues 303-323 traverse the membrane as a helical segment; the sequence is WIILAVLVPCLIVLVLFVLWF. Residues 324–333 are Cytoplasmic-facing; sequence YRRWSYEDIL. The short motif at 329–332 is the Internalization signal element; the sequence is YEDI.

In terms of assembly, heterodimer with B2M (beta-2-microglobulin). Interacts with saposin C.

The protein resides in the cell membrane. It is found in the endosome membrane. It localises to the lysosome membrane. Its function is as follows. Antigen-presenting protein that binds self and non-self lipid and glycolipid antigens and presents them to T-cell receptors on natural killer T-cells. This Cavia porcellus (Guinea pig) protein is T-cell surface glycoprotein CD1b1 (CD1B1).